Consider the following 151-residue polypeptide: UPF0756 membrane protein LBA0919 (151 aa).

4 helical membrane-spanning segments follow: residues 4 to 24, 52 to 72, 78 to 98, and 115 to 135; these read WLFLALILVVALLGKNMSLII, WGVTIISVAILIPIATGQIGF, TFKTPAGWIAILAGIAVAVLS, and LVLGTIIGVVAFKGVAAGPVI.

The protein belongs to the UPF0756 family.

The protein localises to the cell membrane. The chain is UPF0756 membrane protein LBA0919 from Lactobacillus acidophilus (strain ATCC 700396 / NCK56 / N2 / NCFM).